Reading from the N-terminus, the 448-residue chain is Ribonuclease J (448 aa).

Positions 81, 83, 85, 86, 151, and 173 each coordinate Zn(2+). 383-387 contributes to the substrate binding site; it reads HVSGH. His-409 is a Zn(2+) binding site.

This sequence belongs to the metallo-beta-lactamase superfamily. RNA-metabolizing metallo-beta-lactamase-like family. Archaeal RNase J subfamily. As to quaternary structure, forms homodimers on heating to 60 degrees Celsius which may be the active form. The cofactor is Zn(2+).

It localises to the cytoplasm. Its activity is regulated as follows. Inhibited by imidazole. Functionally, a 5'-3' exoribonuclease with a strong reference for 5'-monophosphorylated RNA and no endoribonuclease activty. Also has robust 5'-'3 nuclease activity on single-stranded DNA (exodeoxyribonuclease, exoDNase). May be involved in RNA degradation. This chain is Ribonuclease J, found in Methanocaldococcus jannaschii (strain ATCC 43067 / DSM 2661 / JAL-1 / JCM 10045 / NBRC 100440) (Methanococcus jannaschii).